The chain runs to 520 residues: F-box/LRR-repeat protein At3g59200 (520 aa).

The region spanning 6–54 is the F-box domain; sequence RDRISSLPNPVVSHILSFLPTKEAASTSVLSKKWRYLFAYVTNLDFDDS. 3 LRR repeats span residues 170-197, 219-244, and 340-365; these read CVDV…VLMN, FCEE…EYSD, and NSEI…VLKR.

The sequence is that of F-box/LRR-repeat protein At3g59200 from Arabidopsis thaliana (Mouse-ear cress).